Here is a 463-residue protein sequence, read N- to C-terminus: MATSRLPAVPEEETTILMAKEELEALRTAFESGDIPQAASRLRELLATTETTRLEVGVTGESGAGKSSLINALRGVGAEDPGAALTGVVETTMQPSPYPHPQFPDVTLWDLPGAGSPGCSADKYLKEVDFGRYDFFLLVSPRRCGAVETRLASEILRQGKKFYFVRTKVDEDLAATRNQRPSGFSEAAVLQEIRDHCAERLRAAGLSDPRIFLVSNLSPNRYDFPMLVTTWEHDLPAHRRHAGLLSLPDISLEALQKKKDMLQEQVLKTALVSGVIQALPVPGLAAAYDDALLIRSLRGYHRSFGLDDDSLAKLAEQVGKQAGDLRSVIRSPLANEVSPETVLRLYSQSSDGAMRVARAFERGIPVFGTLVAGGISFGTVYTMLQGCLNEMAEDAQRVRIKALEEDETQGEVSLEAAGDNAVEKRSSGEGTSEEAPLSTRRKLGLLLKYILDSWKRRDLSEDK.

In terms of domain architecture, IRG-type G spans 52-234; the sequence is TRLEVGVTGE…PMLVTTWEHD (183 aa). GTP-binding positions include 61–68, 86–90, 168–170, and 215–217; these read ESGAGKSS, TGVVE, KVD, and SNL. A phosphoserine mark is found at Ser246 and Ser303. The interval 409–438 is disordered; the sequence is QGEVSLEAAGDNAVEKRSSGEGTSEEAPLS.

This sequence belongs to the TRAFAC class dynamin-like GTPase superfamily. IRG family.

The protein resides in the cell projection. It is found in the cilium. The protein localises to the flagellum. Its subcellular location is the lipid droplet. The catalysed reaction is GTP + H2O = GDP + phosphate + H(+). Required for sperm motility and therefore male fertility, via positive regulation of spermatozoa fibrous sheath formation. This is Interferon-inducible GTPase 5 (Irgc) from Rattus norvegicus (Rat).